A 70-amino-acid polypeptide reads, in one-letter code: Deleted in esophageal cancer 1 (70 aa).

As to expression, expressed in many tissues, with highest expression in prostate and testis. Reduced expression in esophageal carcinomas.

In terms of biological role, candidate tumor suppressor. The polypeptide is Deleted in esophageal cancer 1 (Homo sapiens (Human)).